The following is a 329-amino-acid chain: Pantothenate kinase (329 aa).

107–114 (GSVAVGKS) is an ATP binding site.

It belongs to the prokaryotic pantothenate kinase family.

The protein resides in the cytoplasm. It carries out the reaction (R)-pantothenate + ATP = (R)-4'-phosphopantothenate + ADP + H(+). It participates in cofactor biosynthesis; coenzyme A biosynthesis; CoA from (R)-pantothenate: step 1/5. The protein is Pantothenate kinase of Streptomyces avermitilis (strain ATCC 31267 / DSM 46492 / JCM 5070 / NBRC 14893 / NCIMB 12804 / NRRL 8165 / MA-4680).